The primary structure comprises 458 residues: Peptidyl-prolyl cis-trans isomerase FKBP4 (458 aa).

Met-1 is subject to N-acetylmethionine; in peptidyl-prolyl cis-trans isomerase FKBP4; alternate. The disordered stretch occupies residues 1–24; sequence MTAEEMKAAENGAQSAPLPLEGVD. Thr-2 is subject to N-acetylthreonine; in peptidyl-prolyl cis-trans isomerase FKBP4, N-terminally processed; partial. The PPIase FKBP-type 1 domain occupies 50-138; the sequence is GDRVFVHYTG…VFEVELFEFK (89 aa). At Thr-143 the chain carries Phosphothreonine; by CK2. The region spanning 167 to 253 is the PPIase FKBP-type 2 domain; that stretch reads GAMVEVALEG…RYEVRLKSFE (87 aa). Tyr-220 carries the phosphotyrosine modification. Residues 267 to 400 form an interaction with tubulin region; sequence LEQSNIVKER…TQLAVCQQRT (134 aa). 3 TPR repeats span residues 270 to 303, 319 to 352, and 353 to 386; these read SNIV…LEYE, LASH…DSNN, and EKGL…YPSN. The residue at position 282 (Lys-282) is an N6-acetyllysine. Position 373 is an omega-N-methylarginine (Arg-373). Positions 428-458 are disordered; the sequence is EVAAGDHPTDAEMKGERNNVAENQSRVETEA. Residues 434–458 show a composition bias toward basic and acidic residues; that stretch reads HPTDAEMKGERNNVAENQSRVETEA. Thr-436 carries the phosphothreonine modification. Residue Lys-441 forms a Glycyl lysine isopeptide (Lys-Gly) (interchain with G-Cter in SUMO1) linkage. Ser-452 bears the Phosphoserine mark.

Homodimer. Interacts with GLMN. Associates with HSP90AA1 and HSPA1A/HSPA1B in steroid hormone receptor complexes. Also interacts with peroxisomal phytanoyl-CoA alpha-hydroxylase (PHYH). Interacts with NR3C1 and dynein. Interacts with HSF1 in the HSP90 complex. Associates with tubulin. Interacts with MAPT/TAU. Interacts (via TPR domain) with S100A1, S100A2 and S100A6; the interaction is Ca(2+) dependent. Interaction with S100A1 and S100A2 (but not with S100A6) leads to inhibition of FKBP4-HSP90 interaction. Interacts with dynein; contributes to NR3C1 transport to the nucleus. Phosphorylation by CK2 results in loss of HSP90 binding activity.

Its subcellular location is the cytoplasm. It localises to the cytosol. The protein resides in the mitochondrion. The protein localises to the nucleus. It is found in the cytoskeleton. The catalysed reaction is [protein]-peptidylproline (omega=180) = [protein]-peptidylproline (omega=0). With respect to regulation, inhibited by FK506. Immunophilin protein with PPIase and co-chaperone activities. Component of steroid receptors heterocomplexes through interaction with heat-shock protein 90 (HSP90). May play a role in the intracellular trafficking of heterooligomeric forms of steroid hormone receptors between cytoplasm and nuclear compartments. The isomerase activity controls neuronal growth cones via regulation of TRPC1 channel opening. Also acts as a regulator of microtubule dynamics by inhibiting MAPT/TAU ability to promote microtubule assembly. May have a protective role against oxidative stress in mitochondria. The sequence is that of Peptidyl-prolyl cis-trans isomerase FKBP4 (Fkbp4) from Mus musculus (Mouse).